Consider the following 82-residue polypeptide: Cytochrome b559 subunit alpha (82 aa).

A helical transmembrane segment spans residues 22 to 36 (IIHAVTLPAIFIAGF). His-24 contributes to the heme binding site.

This sequence belongs to the PsbE/PsbF family. In terms of assembly, heterodimer of an alpha subunit and a beta subunit. PSII is composed of 1 copy each of membrane proteins PsbA, PsbB, PsbC, PsbD, PsbE, PsbF, PsbH, PsbI, PsbJ, PsbK, PsbL, PsbM, PsbT, PsbX, PsbY, Psb30/Ycf12, peripheral proteins PsbO, CyanoQ (PsbQ), PsbU, PsbV and a large number of cofactors. It forms dimeric complexes. Heme b is required as a cofactor.

The protein localises to the cellular thylakoid membrane. This b-type cytochrome is tightly associated with the reaction center of photosystem II (PSII). PSII is a light-driven water:plastoquinone oxidoreductase that uses light energy to abstract electrons from H(2)O, generating O(2) and a proton gradient subsequently used for ATP formation. It consists of a core antenna complex that captures photons, and an electron transfer chain that converts photonic excitation into a charge separation. The sequence is that of Cytochrome b559 subunit alpha from Prochlorococcus marinus (strain SARG / CCMP1375 / SS120).